The following is a 57-amino-acid chain: Large ribosomal subunit protein bL32 (57 aa).

Belongs to the bacterial ribosomal protein bL32 family.

The protein is Large ribosomal subunit protein bL32 of Geobacillus sp. (strain WCH70).